The chain runs to 118 residues: MARVVALVLLGLLSLTGLEAVPRVPKVQVYSRHPAENGKPNFLNCYVSGFHPPEIEIDLLKNGEKMKVDRSDLSFSKDWSFYLLVHTDFTPNGVDEYSCRVQHSTLKDPLIVKWDRDL.

Residues 1-20 form the signal peptide; that stretch reads MARVVALVLLGLLSLTGLEA. The Ig-like C1-type domain maps to 22–115; it reads PRVPKVQVYS…LKDPLIVKWD (94 aa). Cysteine 45 and cysteine 99 are joined by a disulfide.

Belongs to the beta-2-microglobulin family. As to quaternary structure, heterodimer of an alpha chain and a beta chain. Beta-2-microglobulin is the beta-chain of major histocompatibility complex class I molecules.

It localises to the secreted. Functionally, component of the class I major histocompatibility complex (MHC). Involved in the presentation of peptide antigens to the immune system. This chain is Beta-2-microglobulin (B2M), found in Equus caballus (Horse).